The chain runs to 714 residues: Calpain-1 catalytic subunit (714 aa).

The Calpain catalytic domain maps to 55-354; sequence LFRDEAFPPV…FTRLEICNLT (300 aa). Residues glutamine 109 and aspartate 114 each coordinate Ca(2+). Catalysis depends on residues cysteine 115, histidine 272, and asparagine 296. Ca(2+) contacts are provided by aspartate 318 and aspartate 323. A Phosphothreonine modification is found at threonine 354. The interval 355–526 is domain III; it reads PDALKSQRVR…KKAGTQELDD (172 aa). The segment at 527–542 is linker; it reads QVQAILPDEQVLSEEE. The tract at residues 543-713 is domain IV; the sequence is IDENFKALFR…LFKWLQLTMF (171 aa). EF-hand domains follow at residues 585–618, 615–650, and 680–714; these read FSLESCRSMVNLMDRDGNGKLGLVEFNILWNRIR, NRIRNYLSIFRKFDLDKSGSMSAYEMRMAIESAGFK, and VRLETMFRFFKTLDTDLDGVVTFDLFKWLQLTMFA. Residues aspartate 598, aspartate 600, asparagine 602, lysine 604, glutamate 609, aspartate 628, aspartate 630, serine 632, serine 634, and glutamate 639 each coordinate Ca(2+).

The protein belongs to the peptidase C2 family. In terms of assembly, forms a heterodimer with a small (regulatory) subunit CAPNS1. Ca(2+) is required as a cofactor. Undergoes calcium-induced successive autoproteolytic cleavages that generate a membrane-bound 78 kDa active form and an intracellular 75 kDa active form. Calpastatin reduces with high efficiency the transition from 78 kDa to 75 kDa calpain forms.

The protein localises to the cytoplasm. It localises to the cell membrane. The enzyme catalyses Broad endopeptidase specificity.. Activated by micromolar concentrations of calcium and inhibited by calpastatin. Calcium-regulated non-lysosomal thiol-protease which catalyzes limited proteolysis of substrates involved in cytoskeletal remodeling and signal transduction. Proteolytically cleaves CTBP1. Cleaves and activates caspase-7 (CASP7). In Sus scrofa (Pig), this protein is Calpain-1 catalytic subunit.